Consider the following 142-residue polypeptide: Protein archease (142 aa).

Ca(2+) is bound by residues Asp12, Asp141, and Leu142.

This sequence belongs to the archease family.

Functionally, activates the tRNA-splicing ligase complex by facilitating the enzymatic turnover of catalytic subunit RtcB. Acts by promoting the guanylylation of RtcB, a key intermediate step in tRNA ligation. Can also alter the NTP specificity of RtcB such that ATP, dGTP or ITP is used efficiently. This Thermococcus gammatolerans (strain DSM 15229 / JCM 11827 / EJ3) protein is Protein archease.